The following is a 281-amino-acid chain: Pantothenate synthetase (281 aa).

Position 30–37 (30–37) interacts with ATP; sequence MGYLHDGH. Histidine 37 (proton donor) is an active-site residue. Glutamine 61 contacts (R)-pantoate. Glutamine 61 contributes to the beta-alanine binding site. Residue 147–150 participates in ATP binding; sequence GEKD. Glutamine 153 serves as a coordination point for (R)-pantoate. ATP contacts are provided by residues isoleucine 176 and 184–187; that span reads KSSR.

It belongs to the pantothenate synthetase family. In terms of assembly, homodimer.

The protein resides in the cytoplasm. The enzyme catalyses (R)-pantoate + beta-alanine + ATP = (R)-pantothenate + AMP + diphosphate + H(+). It participates in cofactor biosynthesis; (R)-pantothenate biosynthesis; (R)-pantothenate from (R)-pantoate and beta-alanine: step 1/1. In terms of biological role, catalyzes the condensation of pantoate with beta-alanine in an ATP-dependent reaction via a pantoyl-adenylate intermediate. The protein is Pantothenate synthetase of Clostridium acetobutylicum (strain ATCC 824 / DSM 792 / JCM 1419 / IAM 19013 / LMG 5710 / NBRC 13948 / NRRL B-527 / VKM B-1787 / 2291 / W).